The chain runs to 146 residues: Cyanate hydratase (146 aa).

Active-site residues include arginine 87, glutamate 90, and serine 113.

Belongs to the cyanase family.

The enzyme catalyses cyanate + hydrogencarbonate + 3 H(+) = NH4(+) + 2 CO2. Its function is as follows. Catalyzes the reaction of cyanate with bicarbonate to produce ammonia and carbon dioxide. This Trichormus variabilis (strain ATCC 29413 / PCC 7937) (Anabaena variabilis) protein is Cyanate hydratase.